A 351-amino-acid polypeptide reads, in one-letter code: MIGYVLNGEHEEIPYGELMALLEIFNYNGSVERLKRYVITEDSPAKDIVKRSGYIDEGHRIIFRYNLEEKSVDLVDKIVNDFINSFKDFVANIDYPDIDESKSYAVRVLKLHKDEFTKSIDSLRIEKEIGGIIKLKTNAKVNLTKPDILVRVVILENTFFISNVLEMRDREYFQKNRPHLRKYFHPGCMLPKLARAMVNLARVKEGDIVLDPFCGTGGFLIEAGLIGAKLIGCDIDWRMASGTLINLEEYNLLDKVIKVKRLDAKYVKEFLNELNIEKVDAIVTDPPYGISTAKKGEIEKILETLPEVIKDNGYFVFAYPKKIELDMELEGLYKVYIHKGLIRHIHVYKKI.

The region spanning 57–165 (EGHRIIFRYN…ENTFFISNVL (109 aa)) is the THUMP domain.

Belongs to the methyltransferase superfamily. Trm-G10 family. Monomer.

It localises to the cytoplasm. It catalyses the reaction guanosine(10) in tRNA + 2 S-adenosyl-L-methionine = N(2)-dimethylguanosine(10) in tRNA + 2 S-adenosyl-L-homocysteine + 2 H(+). Its function is as follows. Catalyzes the adenosylmethionine-dependent methylation of the exocyclic amino group (N(2)) of guanosine at position 10 of various tRNAs. Acts via a two-step process that leads to the formation of either N(2)-monomethyl (m(2)G) or N(2)-dimethylguanosine (m(2)(2)G). In Methanocaldococcus jannaschii (strain ATCC 43067 / DSM 2661 / JAL-1 / JCM 10045 / NBRC 100440) (Methanococcus jannaschii), this protein is tRNA (guanine(10)-N2)-dimethyltransferase (trmG10).